The following is a 318-amino-acid chain: Protoheme IX farnesyltransferase (318 aa).

9 helical membrane passes run 29 to 49 (IIPL…QGQV), 51 to 71 (PVLL…AQTI), 102 to 122 (LIFA…FANL), 123 to 143 (LAAS…THWL), 151 to 171 (IVIG…AVTG), 179 to 199 (LIFA…ALMI), 219 to 239 (ATVK…LLLV), 241 to 261 (PLHA…AVFI), and 280 to 300 (LFLY…VDSL).

It belongs to the UbiA prenyltransferase family. Protoheme IX farnesyltransferase subfamily.

It localises to the cell inner membrane. The catalysed reaction is heme b + (2E,6E)-farnesyl diphosphate + H2O = Fe(II)-heme o + diphosphate. It participates in porphyrin-containing compound metabolism; heme O biosynthesis; heme O from protoheme: step 1/1. Functionally, converts heme B (protoheme IX) to heme O by substitution of the vinyl group on carbon 2 of heme B porphyrin ring with a hydroxyethyl farnesyl side group. This is Protoheme IX farnesyltransferase from Nostoc sp. (strain PCC 7120 / SAG 25.82 / UTEX 2576).